Consider the following 252-residue polypeptide: MKTVTVKDLVIGAGAPKIIVSLMAKDIARVKSEALAYRETDFDILEWRVDHFADLSNVESVMAAAKILRETMPEKPLLFTFRSAKEGGEQAISTEAYIALNRAAIDSGLVDMIDLELFTGDDQVKETVAYAHAHDVKVVMSNHDFHKTPEAEEIIARLRKMQSFDADIPKIALMPQSTSDVLTLLAATLEMQEQYADRPIITMSMAKTGVISRLAGEVFGSAATFGAVKKASAPGQISVNDLRILLTILHQA.

3-dehydroquinate is bound by residues serine 21, 46–48, and arginine 82; that span reads EWR. The Proton donor/acceptor role is filled by histidine 143. The Schiff-base intermediate with substrate role is filled by lysine 170. 3-dehydroquinate is bound by residues arginine 213, serine 232, and glutamine 236.

The protein belongs to the type-I 3-dehydroquinase family. As to quaternary structure, homodimer.

The enzyme catalyses 3-dehydroquinate = 3-dehydroshikimate + H2O. Its pathway is metabolic intermediate biosynthesis; chorismate biosynthesis; chorismate from D-erythrose 4-phosphate and phosphoenolpyruvate: step 3/7. Its function is as follows. Involved in the third step of the chorismate pathway, which leads to the biosynthesis of aromatic amino acids. Catalyzes the cis-dehydration of 3-dehydroquinate (DHQ) and introduces the first double bond of the aromatic ring to yield 3-dehydroshikimate. In Shigella dysenteriae, this protein is 3-dehydroquinate dehydratase.